The primary structure comprises 272 residues: MSRLAGLFVQLRDAGRAALIPFMTAGDPSLTATVPLMHALVAAGADAIELGMPFSDPMADGPSIQRASERALARGVKLRMVLEWVREFRTTNSHTPVILMGYLNPVEAMGITSFAEAAATAGVDGVILVDLTPEEGRGEAVVLRQRGIDPIFLLAPTSGPERVATVRSMGSGFVYYVSLRGITGAAQADWAEVLERVQHLHRQLGLPVAIGFGIRDAATVARVATGADAVVVGSALVDQLAACATDQEAIAAAIRFVEPLAQAVRSTERRGA.

Residues E49 and D60 each act as proton acceptor in the active site.

Belongs to the TrpA family. Tetramer of two alpha and two beta chains.

It catalyses the reaction (1S,2R)-1-C-(indol-3-yl)glycerol 3-phosphate + L-serine = D-glyceraldehyde 3-phosphate + L-tryptophan + H2O. It participates in amino-acid biosynthesis; L-tryptophan biosynthesis; L-tryptophan from chorismate: step 5/5. In terms of biological role, the alpha subunit is responsible for the aldol cleavage of indoleglycerol phosphate to indole and glyceraldehyde 3-phosphate. The sequence is that of Tryptophan synthase alpha chain from Acidithiobacillus ferrooxidans (strain ATCC 23270 / DSM 14882 / CIP 104768 / NCIMB 8455) (Ferrobacillus ferrooxidans (strain ATCC 23270)).